A 424-amino-acid chain; its full sequence is UDP-sugar transporter protein SLC35A5 (424 aa).

The Cytoplasmic portion of the chain corresponds to 1 to 8; sequence MEKQCCSH. The helical transmembrane segment at 9-29 threads the bilayer; sequence PVICSLSTMYTFLLGAIFIAL. The Lumenal portion of the chain corresponds to 30–53; the sequence is SSSRILLVKYSANEENKYDYLPTT. A helical membrane pass occupies residues 54–74; it reads VNVCSELVKLVFCVLVSFCVI. Residues 75 to 93 are Cytoplasmic-facing; the sequence is KKDHQSRNLKYASWKEFSD. The helical transmembrane segment at 94 to 116 threads the bilayer; the sequence is FMKWSIPAFLYFLDNLIVFYVLS. The Lumenal portion of the chain corresponds to 117–119; that stretch reads YLQ. Residues 120–142 form a helical membrane-spanning segment; sequence PAMAVIFSNFSIITTALLFRIVL. Residues 143-147 lie on the Cytoplasmic side of the membrane; sequence KRRLN. Residues 148–168 form a helical membrane-spanning segment; that stretch reads WIQWASLLTLFLSIVALTAGT. The Lumenal segment spans residues 169–228; the sequence is KTLQHNLAGRGFHHDAFFSPSNSCLLFRSECPRKDNCTAKEWTFPEAKWNTTARVFSHIR. Residue N204 is glycosylated (N-linked (GlcNAc...) asparagine). A helical membrane pass occupies residues 229–249; sequence LGMGHVLIIVQCFISSMANIY. Over 250–263 the chain is Cytoplasmic; sequence NEKILKEGNQLTES. A helical membrane pass occupies residues 264–284; sequence IFIQNSKLYFFGILFNGLTLG. Residues 285 to 303 lie on the Lumenal side of the membrane; that stretch reads LQRSNRDQIKNCGFFYGHS. A helical transmembrane segment spans residues 304–324; that stretch reads AFSVALIFVTAFQGLSVAFIL. Over 325–330 the chain is Cytoplasmic; sequence KFLDNM. Residues 331-351 traverse the membrane as a helical segment; sequence FHVLMAQVTTVIITTVSVLVF. Residues 352 to 354 lie on the Lumenal side of the membrane; that stretch reads DFR. A helical transmembrane segment spans residues 355–375; it reads PSLEFFLEAPSVLLSIFIYNA. Residues 376–424 lie on the Cytoplasmic side of the membrane; the sequence is SKPQVPEYAPRQERIRDLSGNLWERSSGDGEELERLTKPKSDESDEDTF. Phosphoserine is present on residues S394, S416, and S419. Positions 397–424 are disordered; that stretch reads LWERSSGDGEELERLTKPKSDESDEDTF. A compositionally biased stretch (basic and acidic residues) spans 408–417; that stretch reads LERLTKPKSD.

It belongs to the nucleotide-sugar transporter family. SLC35A subfamily. In terms of assembly, probably forms homooligomers and heterooligomers with SLC35A1, SLC35A2, SLC35A3 and SLC35A4.

The protein resides in the golgi apparatus membrane. The catalysed reaction is UMP(out) + UDP-alpha-D-glucuronate(in) = UMP(in) + UDP-alpha-D-glucuronate(out). It catalyses the reaction UMP(out) + UDP-N-acetyl-alpha-D-glucosamine(in) = UMP(in) + UDP-N-acetyl-alpha-D-glucosamine(out). The enzyme catalyses UDP-N-acetyl-alpha-D-galactosamine(in) + UMP(out) = UDP-N-acetyl-alpha-D-galactosamine(out) + UMP(in). Probable UDP-sugar:UMP transmembrane antiporter involved in UDP-alpha-D-glucuronate/UDP-GlcA, UDP-GlcNAc/UDP-N-acetyl-alpha-D-glucosamine and UDP-N-acetyl-alpha-D-galactosamine/UDP-GalNAc transport from the cytosol to the lumen of the Golgi. This chain is UDP-sugar transporter protein SLC35A5, found in Homo sapiens (Human).